The following is a 966-amino-acid chain: Replication protein 1a (966 aa).

The methyltransferase stretch occupies residues 49 to 381 (RNKLSVAECD…VIINGQSIMS (333 aa)). One can recognise an Alphavirus-like MT domain in the interval 71–261 (NLTHEYTAPH…HDWKNLGSFL (191 aa)). In terms of domain architecture, (+)RNA virus helicase ATP-binding spans 660-815 (DKTCSCANAK…NIEYDKRDIV (156 aa)). Positions 687–951 (MVDGVAGCGK…TRHKRTFEYL (265 aa)) are ATP-dependent helicase. 690 to 697 (GVAGCGKT) is a binding site for ATP. Residues 816 to 966 (SKTFRCPQDV…GGDLISFYVT (151 aa)) enclose the (+)RNA virus helicase C-terminal domain.

The protein belongs to the bromoviridae replication protein 1a family.

The protein resides in the host endoplasmic reticulum membrane. Involved in the virus replication. Contains a helicase domain and a methyltransferase domain. The methyltransferase domain is probably involved in viral RNA capping. The chain is Replication protein 1a from Vicia faba (Broad bean).